We begin with the raw amino-acid sequence, 209 residues long: Uridine kinase (209 aa).

12–19 (GGSASGKT) is an ATP binding site.

It belongs to the uridine kinase family.

It localises to the cytoplasm. It catalyses the reaction uridine + ATP = UMP + ADP + H(+). The catalysed reaction is cytidine + ATP = CMP + ADP + H(+). It participates in pyrimidine metabolism; CTP biosynthesis via salvage pathway; CTP from cytidine: step 1/3. Its pathway is pyrimidine metabolism; UMP biosynthesis via salvage pathway; UMP from uridine: step 1/1. In Chloroflexus aggregans (strain MD-66 / DSM 9485), this protein is Uridine kinase.